We begin with the raw amino-acid sequence, 258 residues long: Peptide methionine sulfoxide reductase A4, chloroplastic (258 aa).

The transit peptide at Met1–Pro53 directs the protein to the chloroplast. The residue at position 54 (Met54) is an N-acetylmethionine. Positions Gly62–Ser89 are disordered. Ser245 bears the Phosphoserine mark.

This sequence belongs to the MsrA Met sulfoxide reductase family. Expressed in rosette and cauline leaves, and at lower levels in stems and flowers (at protein level).

It localises to the plastid. The protein localises to the chloroplast stroma. It carries out the reaction L-methionyl-[protein] + [thioredoxin]-disulfide + H2O = L-methionyl-(S)-S-oxide-[protein] + [thioredoxin]-dithiol. The enzyme catalyses [thioredoxin]-disulfide + L-methionine + H2O = L-methionine (S)-S-oxide + [thioredoxin]-dithiol. In terms of biological role, catalyzes the reduction of methionine sulfoxide (MetSO) to methionine in proteins. Plays a protective role against oxidative stress by restoring activity to proteins that have been inactivated by methionine oxidation. Prevents the methionine sulfoxidation of the heat shock protein HSP21 and its subsequent inactivation. MSRA family specifically reduces the MetSO S-enantiomer. The chain is Peptide methionine sulfoxide reductase A4, chloroplastic (MSR4) from Arabidopsis thaliana (Mouse-ear cress).